Here is a 215-residue protein sequence, read N- to C-terminus: Urease accessory protein UreG (215 aa).

Position 24–31 (24–31 (GPVGSGKT)) interacts with GTP.

Belongs to the SIMIBI class G3E GTPase family. UreG subfamily. Homodimer. UreD, UreF and UreG form a complex that acts as a GTP-hydrolysis-dependent molecular chaperone, activating the urease apoprotein by helping to assemble the nickel containing metallocenter of UreC. The UreE protein probably delivers the nickel.

Its subcellular location is the cytoplasm. Functionally, facilitates the functional incorporation of the urease nickel metallocenter. This process requires GTP hydrolysis, probably effectuated by UreG. The sequence is that of Urease accessory protein UreG from Burkholderia ambifaria (strain MC40-6).